The chain runs to 194 residues: Probable GTP-binding protein EngB (194 aa).

In terms of domain architecture, EngB-type G spans 22–194; it reads DLPEFALAGR…KFWDWIEDKM (173 aa). Residues 30 to 37, 57 to 61, 75 to 78, 142 to 145, and 175 to 177 each bind GTP; these read GRSNVGKS, GKTQT, DVPG, TKMD, and FSS. 2 residues coordinate Mg(2+): Ser37 and Thr59.

The protein belongs to the TRAFAC class TrmE-Era-EngA-EngB-Septin-like GTPase superfamily. EngB GTPase family. The cofactor is Mg(2+).

In terms of biological role, necessary for normal cell division and for the maintenance of normal septation. The chain is Probable GTP-binding protein EngB from Lactobacillus gasseri (strain ATCC 33323 / DSM 20243 / BCRC 14619 / CIP 102991 / JCM 1131 / KCTC 3163 / NCIMB 11718 / NCTC 13722 / AM63).